Here is a 134-residue protein sequence, read N- to C-terminus: Small ribosomal subunit protein uS8 (134 aa).

The protein belongs to the universal ribosomal protein uS8 family. As to quaternary structure, part of the 30S ribosomal subunit. Contacts proteins S5 and S12.

One of the primary rRNA binding proteins, it binds directly to 16S rRNA central domain where it helps coordinate assembly of the platform of the 30S subunit. The protein is Small ribosomal subunit protein uS8 of Thermosipho africanus (strain TCF52B).